A 422-amino-acid polypeptide reads, in one-letter code: G-protein coupled receptor 83 (422 aa).

Positions 1–17 (MNVPPVLLLFLLSSVRA) are cleaved as a signal peptide. Residues 18–70 (TEQPQVVTEHPSMDAALTGANASHFWANYTFSDWQNFVGRRRYGAESQNPTVK) are Extracellular-facing. The chain crosses the membrane as a helical span at residues 71 to 91 (ALLIVAYSFIIVFSLFGNVLV). Over 92-106 (CHVIFKNQRMHSATS) the chain is Cytoplasmic. The helical transmembrane segment at 107-127 (LFIVNLAVADIMITLLNTPFT) threads the bilayer. Residues 128–143 (LVRFVNSTWVFGKGMC) lie on the Extracellular side of the membrane. Cys-143 and Cys-223 are joined by a disulfide. Residues 144–166 (HVSRFAQYCSLHVSALTLTAIAV) traverse the membrane as a helical segment. The Cytoplasmic portion of the chain corresponds to 167-184 (DRHQVIMHPLKPRISITK). Residues 185–205 (GVIYIAVIWVMATFFSLPHAI) form a helical membrane-spanning segment. Over 206-236 (CQKLFTFKYSEDIVRSLCLPDFPEPADLFWK) the chain is Extracellular. A helical transmembrane segment spans residues 237-257 (YLDLATFILLYLLPLFIISVA). The Cytoplasmic portion of the chain corresponds to 258–292 (YARVAKKLWLCNTIGDVTTEQYLALRRKKKTTVKM). Residues 293 to 313 (LVLVVVLFALCWFPLNCYVLL) traverse the membrane as a helical segment. At 314–326 (LSSKAIHTNNALY) the chain is on the extracellular side. A helical membrane pass occupies residues 327–347 (FAFHWFAMSSTCYNPFIYCWL). Residues 348–422 (NENFRVELKA…SSVEPTVAVS (75 aa)) lie on the Cytoplasmic side of the membrane. The tract at residues 401–422 (PSSQIQSGKTDLSSVEPTVAVS) is disordered.

It belongs to the G-protein coupled receptor 1 family. Expressed preferentially in brain, and its neuronal expression is relegated to limbic brain regions, particularly in forebrain.

The protein localises to the cell membrane. In terms of biological role, G-protein coupled receptor for PEN, a neuropeptide produced from the precursor protein, proSAAS (encoded by PCSK1N). Acts through a G(i)- and G(q)-alpha-alpha-mediated pathway in response to PEN. Plays a role in food intake and body weight regulation. May contribute to the regulation of anxiety-related behaviors. In Rattus norvegicus (Rat), this protein is G-protein coupled receptor 83.